We begin with the raw amino-acid sequence, 150 residues long: Large ribosomal subunit protein bL9 (150 aa).

The protein belongs to the bacterial ribosomal protein bL9 family.

Its function is as follows. Binds to the 23S rRNA. The polypeptide is Large ribosomal subunit protein bL9 (Arthrobacter sp. (strain FB24)).